A 65-amino-acid polypeptide reads, in one-letter code: Large ribosomal subunit protein bL35 (65 aa).

The segment at 1–29 is disordered; that stretch reads MPKMKTHSGAKKRFKLTGSGKVKRQQANR.

The protein belongs to the bacterial ribosomal protein bL35 family.

The protein is Large ribosomal subunit protein bL35 of Kocuria rhizophila (strain ATCC 9341 / DSM 348 / NBRC 103217 / DC2201).